A 137-amino-acid polypeptide reads, in one-letter code: uncharacterized protein (137 aa).

Residues 1–10 (MISVDVPGHP) are compositionally biased toward low complexity. Positions 1-23 (MISVDVPGHPGDAGGGGGGARKV) are disordered. Residues 11–20 (GDAGGGGGGA) show a composition bias toward gly residues.

This is an uncharacterized protein from Human adenovirus C serotype 2 (HAdV-2).